The primary structure comprises 207 residues: Killer cell lectin-like receptor subfamily F member 2 (207 aa).

Residues 1–30 lie on the Cytoplasmic side of the membrane; it reads MENEDGYMTLSFKNRCKSKQKSKDFSLYPQ. Residue Y7 is modified to Phosphotyrosine. Residues 31-51 traverse the membrane as a helical; Signal-anchor for type II membrane protein segment; the sequence is YYCLLLIFGCIVILIFIMTGI. Residues 52–207 are Extracellular-facing; sequence DLKFWHKKMD…ILTHNGTSGV (156 aa). The N-linked (GlcNAc...) asparagine glycan is linked to N67. 3 cysteine pairs are disulfide-bonded: C78–C89, C106–C193, and C172–C185. Residues 85–194 enclose the C-type lectin domain; the sequence is NEGKCYWFST…CSSTFKGICQ (110 aa). Residue N202 is glycosylated (N-linked (GlcNAc...) asparagine).

In terms of assembly, homodimer; non-disulfide-linked. Interacts with CLEC2A. Post-translationally, N-glycosylated.

Its subcellular location is the cell membrane. C-type lectin-like receptor involved in natural killer cell mediated cytotoxicity and cytokine secretion in keratinocytes via its interaction with CLEC2A. Triggers degranulation in a SYK-dependent manner and stimulates SYK phosphotyrosinylation without recruiting SYK directly. The polypeptide is Killer cell lectin-like receptor subfamily F member 2 (KLRF2) (Homo sapiens (Human)).